The sequence spans 251 residues: Hydroxyacylglutathione hydrolase (251 aa).

Zn(2+) contacts are provided by histidine 53, histidine 55, aspartate 57, histidine 58, histidine 110, aspartate 127, and histidine 165.

The protein belongs to the metallo-beta-lactamase superfamily. Glyoxalase II family. In terms of assembly, monomer. Zn(2+) is required as a cofactor.

The catalysed reaction is an S-(2-hydroxyacyl)glutathione + H2O = a 2-hydroxy carboxylate + glutathione + H(+). The protein operates within secondary metabolite metabolism; methylglyoxal degradation; (R)-lactate from methylglyoxal: step 2/2. In terms of biological role, thiolesterase that catalyzes the hydrolysis of S-D-lactoyl-glutathione to form glutathione and D-lactic acid. This chain is Hydroxyacylglutathione hydrolase, found in Escherichia coli O17:K52:H18 (strain UMN026 / ExPEC).